The chain runs to 184 residues: Ribosome-recycling factor (184 aa).

It belongs to the RRF family.

The protein resides in the cytoplasm. Responsible for the release of ribosomes from messenger RNA at the termination of protein biosynthesis. May increase the efficiency of translation by recycling ribosomes from one round of translation to another. This is Ribosome-recycling factor from Psychrobacter arcticus (strain DSM 17307 / VKM B-2377 / 273-4).